A 156-amino-acid polypeptide reads, in one-letter code: Peptidyl-prolyl cis-trans isomerase H (156 aa).

In terms of domain architecture, PPIase cyclophilin-type spans 1–155 (TPAGRLKCEL…MAVRITQCGE (155 aa)).

Belongs to the cyclophilin-type PPIase family. PPIase H subfamily.

Its subcellular location is the nucleus. The catalysed reaction is [protein]-peptidylproline (omega=180) = [protein]-peptidylproline (omega=0). PPIases accelerate the folding of proteins. It catalyzes the cis-trans isomerization of proline imidic peptide bonds in oligopeptides. This Mycosarcoma maydis (Corn smut fungus) protein is Peptidyl-prolyl cis-trans isomerase H (CYP3).